The chain runs to 839 residues: LPS-assembly protein LptD (839 aa).

The first 21 residues, 1–21 (MAIGITACVLSLINYQGLAYS), serve as a signal peptide directing secretion.

The protein belongs to the LptD family. Component of the lipopolysaccharide transport and assembly complex. Interacts with LptE and LptA.

The protein localises to the cell outer membrane. Together with LptE, is involved in the assembly of lipopolysaccharide (LPS) at the surface of the outer membrane. This is LPS-assembly protein LptD from Legionella pneumophila (strain Lens).